Consider the following 105-residue polypeptide: Ig lambda chain C region (105 aa).

Positions 6-100 (PSVILFPPSS…EGHTVEKSLA (95 aa)) constitute an Ig-like domain. Cysteine 27 and cysteine 86 are disulfide-bonded.

This Oryctolagus cuniculus (Rabbit) protein is Ig lambda chain C region.